The primary structure comprises 505 residues: Putative F-box protein At1g58310 (505 aa).

The region spanning 7 to 55 (RDIISGLPDSLLCHILSFLNTKEAASTSVLAKKWRYLFASVPNLDFDDS) is the F-box domain.

The chain is Putative F-box protein At1g58310 from Arabidopsis thaliana (Mouse-ear cress).